The sequence spans 178 residues: NADH-quinone oxidoreductase subunit B (178 aa).

Positions 45, 46, 111, and 140 each coordinate [4Fe-4S] cluster.

It belongs to the complex I 20 kDa subunit family. In terms of assembly, NDH-1 is composed of 15 different subunits. Subunits NuoB, C, D, E, F, and G constitute the peripheral sector of the complex. It depends on [4Fe-4S] cluster as a cofactor.

The protein localises to the cell membrane. It catalyses the reaction a quinone + NADH + 5 H(+)(in) = a quinol + NAD(+) + 4 H(+)(out). Functionally, NDH-1 shuttles electrons from NADH, via FMN and iron-sulfur (Fe-S) centers, to quinones in the respiratory chain. The immediate electron acceptor for the enzyme in this species is believed to be a menaquinone. Couples the redox reaction to proton translocation (for every two electrons transferred, four hydrogen ions are translocated across the cytoplasmic membrane), and thus conserves the redox energy in a proton gradient. This is NADH-quinone oxidoreductase subunit B from Deinococcus geothermalis (strain DSM 11300 / CIP 105573 / AG-3a).